The following is a 148-amino-acid chain: Deoxyuridine 5'-triphosphate nucleotidohydrolase (148 aa).

Residues 68 to 70 (RSG), Asn81, 85 to 87 (TID), and Lys95 each bind substrate.

Belongs to the dUTPase family. The cofactor is Mg(2+).

The catalysed reaction is dUTP + H2O = dUMP + diphosphate + H(+). It functions in the pathway pyrimidine metabolism; dUMP biosynthesis; dUMP from dCTP (dUTP route): step 2/2. This enzyme is involved in nucleotide metabolism: it produces dUMP, the immediate precursor of thymidine nucleotides and it decreases the intracellular concentration of dUTP so that uracil cannot be incorporated into DNA. The chain is Deoxyuridine 5'-triphosphate nucleotidohydrolase from Rickettsia massiliae (strain Mtu5).